The chain runs to 68 residues: MKTQFVVLLVALVLLQMFAQSEAIWGALLSGVADLLGKRGLKNLDDFDDIFDDDLSSADLEFLKQLMR.

The first 23 residues, 1–23, serve as a signal peptide directing secretion; it reads MKTQFVVLLVALVLLQMFAQSEA. Leu-36 bears the Leucine amide mark. The propeptide occupies 37–68; sequence GKRGLKNLDDFDDIFDDDLSSADLEFLKQLMR.

It belongs to the non-disulfide-bridged peptide (NDBP) superfamily. Short antimicrobial peptide (group 4) family. As to expression, expressed by the venom gland.

Its subcellular location is the secreted. Functionally, probable antimicrobial peptide. Shows low inhibitory activity against herpes simplex virus type 1 (HSV-1). The polypeptide is Antimicrobial peptide Eval655 (Euscorpiops validus (Scorpion)).